A 172-amino-acid chain; its full sequence is dCTP deaminase (172 aa).

DCTP contacts are provided by residues 97-102 and Asp-113; that span reads RSSFAR. Glu-123 (proton donor/acceptor) is an active-site residue. Positions 155 and 162 each coordinate dCTP.

This sequence belongs to the dCTP deaminase family. In terms of assembly, homotrimer.

The enzyme catalyses dCTP + H2O + H(+) = dUTP + NH4(+). It functions in the pathway pyrimidine metabolism; dUMP biosynthesis; dUMP from dCTP (dUTP route): step 1/2. Catalyzes the deamination of dCTP to dUTP. The polypeptide is dCTP deaminase (Metallosphaera sedula (strain ATCC 51363 / DSM 5348 / JCM 9185 / NBRC 15509 / TH2)).